We begin with the raw amino-acid sequence, 242 residues long: MKMCFPCLQCFCSTSDDKVVVSKNDKGGESGKKFRLFSYHELKVACDGFSSKNKVGEGGCGAVYKGRLTDGTMVAIKVLSVELESMRGEREFISEIAALSDAQHENLVNLHGCCVEEATRCLVYDYMENNSLAYQFLGREQNRNSFDWTKRKNVLLGVAKALAYLHEEINPHIVHRDIKASNVLLDHNFNPKVADFGLARLFQEGTSHISTRVAGTLGYLSPEYAVSERLTRKSDVYSFGVL.

The Protein kinase domain occupies 49 to 242 (FSSKNKVGEG…KSDVYSFGVL (194 aa)). Residues 55–63 (VGEGGCGAV) and K77 each bind ATP. The Proton acceptor role is filled by D177.

The protein belongs to the protein kinase superfamily. Ser/Thr protein kinase family.

The catalysed reaction is L-seryl-[protein] + ATP = O-phospho-L-seryl-[protein] + ADP + H(+). The enzyme catalyses L-threonyl-[protein] + ATP = O-phospho-L-threonyl-[protein] + ADP + H(+). This is Putative serine/threonine-protein kinase from Helianthus annuus (Common sunflower).